Here is a 418-residue protein sequence, read N- to C-terminus: Equilibrative nucleotide transporter 4 (418 aa).

11 helical membrane-spanning segments follow: residues 20 to 40, 54 to 74, 85 to 105, 108 to 128, 147 to 169, 186 to 206, 264 to 284, 291 to 311, 326 to 346, 353 to 373, and 392 to 412; these read MVVC…MLTI, SRVF…ILAY, ILTG…LDLT, GHGG…FGLA, LIQS…RLIT, IFLA…AYVF, HAVN…GFLY, GLGD…DLFG, KALT…YFTA, WMIM…VCIM, and LVVF…LWLI.

It belongs to the SLC29A/ENT transporter (TC 2.A.57) family. As to expression, expressed in leaves and at lowe levels in stems and flowers.

Its subcellular location is the cell membrane. Nucleoside transporter that can mediate uptake of adenosine, uridine, guanosine or cytidine when expressed in a heterologous system (yeast). The chain is Equilibrative nucleotide transporter 4 (ENT4) from Arabidopsis thaliana (Mouse-ear cress).